The chain runs to 401 residues: Dual-specificity RNA methyltransferase RlmN (401 aa).

Glutamate 114 functions as the Proton acceptor in the catalytic mechanism. Residues aspartate 120–aspartate 365 form the Radical SAM core domain. An intrachain disulfide couples cysteine 127 to cysteine 370. Positions 134, 138, and 141 each coordinate [4Fe-4S] cluster. Residues glycine 187–glutamate 188, serine 219, serine 241–histidine 243, and asparagine 327 contribute to the S-adenosyl-L-methionine site. Cysteine 370 (S-methylcysteine intermediate) is an active-site residue.

The protein belongs to the radical SAM superfamily. RlmN family. [4Fe-4S] cluster is required as a cofactor.

It is found in the cytoplasm. It catalyses the reaction adenosine(2503) in 23S rRNA + 2 reduced [2Fe-2S]-[ferredoxin] + 2 S-adenosyl-L-methionine = 2-methyladenosine(2503) in 23S rRNA + 5'-deoxyadenosine + L-methionine + 2 oxidized [2Fe-2S]-[ferredoxin] + S-adenosyl-L-homocysteine. The enzyme catalyses adenosine(37) in tRNA + 2 reduced [2Fe-2S]-[ferredoxin] + 2 S-adenosyl-L-methionine = 2-methyladenosine(37) in tRNA + 5'-deoxyadenosine + L-methionine + 2 oxidized [2Fe-2S]-[ferredoxin] + S-adenosyl-L-homocysteine. Functionally, specifically methylates position 2 of adenine 2503 in 23S rRNA and position 2 of adenine 37 in tRNAs. m2A2503 modification seems to play a crucial role in the proofreading step occurring at the peptidyl transferase center and thus would serve to optimize ribosomal fidelity. In Xanthomonas axonopodis pv. citri (strain 306), this protein is Dual-specificity RNA methyltransferase RlmN.